Here is a 639-residue protein sequence, read N- to C-terminus: CD2-associated protein (639 aa).

The SH3 1; truncated domain maps to 1-59 (MVDYIVEYDYDAVHDDELTIRVGEIIRNVKKLQEEGWLEGELNGRRGMFPDNFVKEIKR). The segment at 1-175 (MVDYIVEYDY…EVTDDGETHE (175 aa)) is interaction with ANLN and localization to the midbody. Lys-58 participates in a covalent cross-link: Glycyl lysine isopeptide (Lys-Gly) (interchain with G-Cter in SUMO2). Ser-67, Ser-80, and Ser-86 each carry phosphoserine. The SH3 2 domain maps to 108–167 (TKKRQCKVLFEYIPQNEDELELKVGDIIDINEEVEEGWWSGTLNNKLGLFPSNFVKELEV). The segment covering 168-177 (TDDGETHEAQ) has biased composition (basic and acidic residues). The tract at residues 168-209 (TDDGETHEAQDDSETVLAGPTSPIPSLGNVSETASGSVTQPK) is disordered. Residues 195–207 (GNVSETASGSVTQ) are compositionally biased toward polar residues. At Ser-224 the chain carries Phosphoserine. A disordered region spans residues 227–256 (LRTRTSSSETEEKKPEKPLILQSLGPKTQS). The SH3 3 domain occupies 269 to 330 (KAKEYCRTLF…PDNFAVQINE (62 aa)). A disordered region spans residues 333 to 428 (KDFPKPKKPP…PPPPIAKING (96 aa)). Short sequence motifs (SH3-binding) lie at residues 336–352 (PKPK…APKP), 378–397 (KPSK…PPTK), and 410–422 (PKRP…PPPP). Pro residues predominate over residues 341-351 (PPPPAKAPAPK). Basic and acidic residues predominate over residues 356-379 (AAEKKYFSLKPEEKDEKSTLEQKP). Residues 385-395 (PQVPPKKPTPP) are compositionally biased toward pro residues. 5 positions are modified to phosphoserine: Ser-458, Ser-463, Ser-469, Ser-510, and Ser-514. A Glycyl lysine isopeptide (Lys-Gly) (interchain with G-Cter in SUMO2) cross-link involves residue Lys-523. Thr-565 is subject to Phosphothreonine. Positions 577–638 (DVKKNSLDEL…IEKLKKAVLS (62 aa)) form a coiled coil. The residue at position 582 (Ser-582) is a Phosphoserine.

Homodimer. Interacts with F-actin, PKD2, NPHS1 and NPHS2. Interacts with WTIP. Interacts with DDN; interaction is direct. Interacts (via SH3 2 domain) with CBL (via phosphorylated C-terminus). Interacts with BCAR1/p130Cas (via SH3 domain). Interacts with MVB12A and ARHGAP17. Interacts with ANLN, CD2 and CBLB. Interacts with PDCD6IP and TSG101. Interacts with RIN3. Interacts directly with RET (inactive) and CBLC; upon RET activation by GDNF suggested to dissociate from RET as CBLC:CD2AP complex. Interacts with CGNL1 and SH3BP1; probably part of a complex at cell junctions. Interacts with CAPZA1. In terms of assembly, (Microbial infection) Interacts (via SH3 domains) with Chikungunya virus non-structural protein 3 (via C-terminus); this interaction plays a role in initiation of viral replication. Phosphorylated on tyrosine residues; probably by c-Abl, Fyn and c-Src. As to expression, widely expressed in fetal and adult tissues.

It localises to the cytoplasm. The protein localises to the cytoskeleton. It is found in the cell projection. Its subcellular location is the ruffle. The protein resides in the cell junction. Its function is as follows. Seems to act as an adapter protein between membrane proteins and the actin cytoskeleton. In collaboration with CBLC, modulates the rate of RET turnover and may act as regulatory checkpoint that limits the potency of GDNF on neuronal survival. Controls CBLC function, converting it from an inhibitor to a promoter of RET degradation. May play a role in receptor clustering and cytoskeletal polarity in the junction between T-cell and antigen-presenting cell. May anchor the podocyte slit diaphragm to the actin cytoskeleton in renal glomerolus. Also required for cytokinesis. Plays a role in epithelial cell junctions formation. This chain is CD2-associated protein (CD2AP), found in Homo sapiens (Human).